We begin with the raw amino-acid sequence, 458 residues long: N-acetylgalactosamine kinase (458 aa).

4 residues coordinate alpha-D-galactose: arginine 43, glutamate 49, histidine 50, and aspartate 52. Residues glycine 143, serine 145, and serine 146 each contribute to the ATP site. Aspartate 190 contacts alpha-D-galactose. Catalysis depends on aspartate 190, which acts as the Proton acceptor. Positions 233 and 234 each coordinate ATP.

Belongs to the GHMP kinase family. GalK subfamily. Monomer.

It catalyses the reaction N-acetyl-alpha-D-galactosamine + ATP = N-acetyl-alpha-D-galactosamine 1-phosphate + ADP + H(+). Functionally, acts on GalNAc. Also acts as a galactokinase when galactose is present at high concentrations. This chain is N-acetylgalactosamine kinase (Galk2), found in Mus musculus (Mouse).